The primary structure comprises 256 residues: tRNA (guanine-N(7)-)-methyltransferase (256 aa).

Residues glutamate 85, glutamate 110, aspartate 137, and aspartate 159 each contribute to the S-adenosyl-L-methionine site. Aspartate 159 is a catalytic residue. Substrate-binding residues include lysine 163 and aspartate 195.

It belongs to the class I-like SAM-binding methyltransferase superfamily. TrmB family.

It carries out the reaction guanosine(46) in tRNA + S-adenosyl-L-methionine = N(7)-methylguanosine(46) in tRNA + S-adenosyl-L-homocysteine. It participates in tRNA modification; N(7)-methylguanine-tRNA biosynthesis. Catalyzes the formation of N(7)-methylguanine at position 46 (m7G46) in tRNA. The sequence is that of tRNA (guanine-N(7)-)-methyltransferase from Rhodopseudomonas palustris (strain HaA2).